The following is a 689-amino-acid chain: Protein asunder (689 aa).

A coiled-coil region spans residues 521–550; it reads NGARLKLSKAKDQYRLLYRELEQLIQLNAT. Disordered stretches follow at residues 578–619 and 662–689; these read GASL…SKRR and PDFGNKDKDTVASGASITPNVKEESVRS. Positions 599–614 are enriched in low complexity; that stretch reads SSGSASGSSNSNSLLK. Positions 613-619 match the Nuclear localization signal (NLS) motif; that stretch reads LKASKRR.

The protein belongs to the Integrator subunit 13 family. In terms of assembly, belongs to the multiprotein complex Integrator, at least composed of IntS1, IntS2, IntS3, IntS4, omd/IntS5, IntS6, defl/IntS7, IntS8, IntS9, IntS10, IntS11, IntS12, asun/IntS13, IntS14 and IntS15. The core complex associates with protein phosphatase 2A subunits mts/PP2A and Pp2A-29B, to form the Integrator-PP2A (INTAC) complex. Phosphorylated.

It localises to the nucleus. The protein localises to the cytoplasm. Its subcellular location is the perinuclear region. Its function is as follows. Component of the integrator complex, a multiprotein complex that terminates RNA polymerase II (Pol II) transcription in the promoter-proximal region of genes. The integrator complex provides a quality checkpoint during transcription elongation by driving premature transcription termination of transcripts that are unfavorably configured for transcriptional elongation: the complex terminates transcription by (1) catalyzing dephosphorylation of the C-terminal domain (CTD) of Pol II subunit Polr2A/Rbp1 and Spt5, and (2) degrading the exiting nascent RNA transcript via endonuclease activity. The integrator complex is also involved in the 3'-end processing of the U7 snRNA, and also the spliceosomal snRNAs U1, U2, U4 and U5. This is Protein asunder (asun) from Drosophila yakuba (Fruit fly).